The following is a 430-amino-acid chain: Tol-Pal system protein TolB (430 aa).

The first 21 residues, 1-21 (MKQALRVAFGFLMLWAAVLHA), serve as a signal peptide directing secretion.

Belongs to the TolB family. In terms of assembly, the Tol-Pal system is composed of five core proteins: the inner membrane proteins TolA, TolQ and TolR, the periplasmic protein TolB and the outer membrane protein Pal. They form a network linking the inner and outer membranes and the peptidoglycan layer.

The protein localises to the periplasm. Its function is as follows. Part of the Tol-Pal system, which plays a role in outer membrane invagination during cell division and is important for maintaining outer membrane integrity. TolB occupies a key intermediary position in the Tol-Pal system because it communicates directly with both membrane-embedded components, Pal in the outer membrane and TolA in the inner membrane. This is Tol-Pal system protein TolB from Salmonella choleraesuis (strain SC-B67).